The following is a 71-amino-acid chain: Small ribosomal subunit protein bS21 (71 aa).

This sequence belongs to the bacterial ribosomal protein bS21 family.

This is Small ribosomal subunit protein bS21 from Hydrogenovibrio crunogenus (strain DSM 25203 / XCL-2) (Thiomicrospira crunogena).